A 399-amino-acid chain; its full sequence is Tryptophan synthase beta chain (399 aa).

K92 carries the post-translational modification N6-(pyridoxal phosphate)lysine.

The protein belongs to the TrpB family. In terms of assembly, tetramer of two alpha and two beta chains. Requires pyridoxal 5'-phosphate as cofactor.

It catalyses the reaction (1S,2R)-1-C-(indol-3-yl)glycerol 3-phosphate + L-serine = D-glyceraldehyde 3-phosphate + L-tryptophan + H2O. It functions in the pathway amino-acid biosynthesis; L-tryptophan biosynthesis; L-tryptophan from chorismate: step 5/5. In terms of biological role, the beta subunit is responsible for the synthesis of L-tryptophan from indole and L-serine. The protein is Tryptophan synthase beta chain of Nitrosomonas eutropha (strain DSM 101675 / C91 / Nm57).